The sequence spans 430 residues: tRNA(Ile)-lysidine synthase (430 aa).

21–26 (SGGLDS) serves as a coordination point for ATP.

The protein belongs to the tRNA(Ile)-lysidine synthase family.

It localises to the cytoplasm. The enzyme catalyses cytidine(34) in tRNA(Ile2) + L-lysine + ATP = lysidine(34) in tRNA(Ile2) + AMP + diphosphate + H(+). In terms of biological role, ligates lysine onto the cytidine present at position 34 of the AUA codon-specific tRNA(Ile) that contains the anticodon CAU, in an ATP-dependent manner. Cytidine is converted to lysidine, thus changing the amino acid specificity of the tRNA from methionine to isoleucine. This chain is tRNA(Ile)-lysidine synthase, found in Salmonella typhi.